Reading from the N-terminus, the 225-residue chain is MRYRCPMNCPSLRNQEYRREIMISEQLMGRGIRDPAVLAAMRQVPREAFVDQGMRELAYEDHPLPIDGGQTISQPYIVAYMTEALELSSSDRVLEIGTGSGYAAAVLSRIVHTVYSVERLEELARGARQRLESLGYNNVEVFEGDGTLGWPEHAPYDAIVVTAGAPAVPKPLLRQLVVGGRLVIPVGASSFLQNLIRVRRQGEDDYRSEELCGVRFVPLVGAEGW.

Residue Ser-73 is part of the active site.

The protein belongs to the methyltransferase superfamily. L-isoaspartyl/D-aspartyl protein methyltransferase family.

It localises to the cytoplasm. It catalyses the reaction [protein]-L-isoaspartate + S-adenosyl-L-methionine = [protein]-L-isoaspartate alpha-methyl ester + S-adenosyl-L-homocysteine. Catalyzes the methyl esterification of L-isoaspartyl residues in peptides and proteins that result from spontaneous decomposition of normal L-aspartyl and L-asparaginyl residues. It plays a role in the repair and/or degradation of damaged proteins. This is Protein-L-isoaspartate O-methyltransferase 2 from Pelobacter propionicus (strain DSM 2379 / NBRC 103807 / OttBd1).